Reading from the N-terminus, the 332-residue chain is UBA domain-containing protein Mud1 (332 aa).

The active site involves Asp-127. The interval 246–298 (GLGIEPASKASASSPNPQSGTRLGTKESVAPNNEGSSNPPSLVNPPTDPGLNS) is disordered. A compositionally biased stretch (low complexity) spans 251-264 (PASKASASSPNPQS). Residues 275-286 (APNNEGSSNPPS) are compositionally biased toward polar residues. The UBA domain occupies 291–332 (PTDPGLNSKIAQLVSMGFDPLEAAQALDAANGDLDVAASFLL).

It belongs to the DDI1 family. In terms of assembly, homodimer. Interacts (via UBA domain) with polyubiquitin (polyUb) chains (via Lys-48-linked polyUbs). Has weak binding affinity for monoubiquitin. According to another report, has no affinity for monoubiquitin.

It is found in the cytoplasm. Its subcellular location is the cell membrane. In terms of biological role, recognizes and binds polyubiquitin chains. Acts as a linker between the 19S proteasome and polyubiquitinated proteins via UBA domain interactions with ubiquitin for their subsequent degradation. Aspartic protease. Appears to act as negative regulator of constitutive exocytosis. May act at the level of secretory vesicle docking and fusion as a competitive inhibitor of SNARE assembly. Required for S-phase checkpoint control. The protein is UBA domain-containing protein Mud1 of Schizosaccharomyces pombe (strain 972 / ATCC 24843) (Fission yeast).